Reading from the N-terminus, the 157-residue chain is SsrA-binding protein (157 aa).

The tract at residues 132–157 is disordered; that stretch reads VHDKRQAQKDKDWAREKDRLFKKAYK. Residues 135-157 are compositionally biased toward basic and acidic residues; it reads KRQAQKDKDWAREKDRLFKKAYK.

It belongs to the SmpB family.

The protein localises to the cytoplasm. Required for rescue of stalled ribosomes mediated by trans-translation. Binds to transfer-messenger RNA (tmRNA), required for stable association of tmRNA with ribosomes. tmRNA and SmpB together mimic tRNA shape, replacing the anticodon stem-loop with SmpB. tmRNA is encoded by the ssrA gene; the 2 termini fold to resemble tRNA(Ala) and it encodes a 'tag peptide', a short internal open reading frame. During trans-translation Ala-aminoacylated tmRNA acts like a tRNA, entering the A-site of stalled ribosomes, displacing the stalled mRNA. The ribosome then switches to translate the ORF on the tmRNA; the nascent peptide is terminated with the 'tag peptide' encoded by the tmRNA and targeted for degradation. The ribosome is freed to recommence translation, which seems to be the essential function of trans-translation. The sequence is that of SsrA-binding protein from Francisella tularensis subsp. tularensis (strain FSC 198).